The primary structure comprises 259 residues: Proteasome subunit alpha type-7 (259 aa).

It belongs to the peptidase T1A family. The 26S proteasome consists of a 20S proteasome core and two 19S regulatory subunits. The 20S proteasome core is composed of 28 subunits that are arranged in four stacked rings, resulting in a barrel-shaped structure. The two end rings are each formed by seven alpha subunits, and the two central rings are each formed by seven beta subunits. The catalytic chamber with the active sites is on the inside of the barrel.

It is found in the cytoplasm. The protein resides in the nucleus. Its function is as follows. The proteasome is a multicatalytic proteinase complex which is characterized by its ability to cleave peptides with Arg, Phe, Tyr, Leu, and Glu adjacent to the leaving group at neutral or slightly basic pH. The proteasome has an ATP-dependent proteolytic activity. The sequence is that of Proteasome subunit alpha type-7 (PAD1) from Solanum lycopersicum (Tomato).